The chain runs to 519 residues: 2-isopropylmalate synthase (519 aa).

A Pyruvate carboxyltransferase domain is found at 12–274; the sequence is VVIFDTTLRD…WCNVESTTLT (263 aa). Asp-21, His-209, His-211, and Asn-245 together coordinate Mn(2+). The regulatory domain stretch occupies residues 398 to 519; the sequence is RLVSLTVIAG…QREAPVAAAS (122 aa).

It belongs to the alpha-IPM synthase/homocitrate synthase family. LeuA type 1 subfamily. As to quaternary structure, homodimer. Requires Mn(2+) as cofactor.

The protein localises to the cytoplasm. It carries out the reaction 3-methyl-2-oxobutanoate + acetyl-CoA + H2O = (2S)-2-isopropylmalate + CoA + H(+). The protein operates within amino-acid biosynthesis; L-leucine biosynthesis; L-leucine from 3-methyl-2-oxobutanoate: step 1/4. In terms of biological role, catalyzes the condensation of the acetyl group of acetyl-CoA with 3-methyl-2-oxobutanoate (2-ketoisovalerate) to form 3-carboxy-3-hydroxy-4-methylpentanoate (2-isopropylmalate). In Afipia carboxidovorans (strain ATCC 49405 / DSM 1227 / KCTC 32145 / OM5) (Oligotropha carboxidovorans), this protein is 2-isopropylmalate synthase.